The primary structure comprises 454 residues: NADP-specific glutamate dehydrogenase 1 (454 aa).

Lysine 110 is a catalytic residue. 174 to 203 (GVLTGKGLNWGGSLIRPEATGYGLVYYTQA) lines the NAD(+) pocket.

The protein belongs to the Glu/Leu/Phe/Val dehydrogenases family. In terms of assembly, homohexamer.

It catalyses the reaction L-glutamate + NADP(+) + H2O = 2-oxoglutarate + NH4(+) + NADPH + H(+). The polypeptide is NADP-specific glutamate dehydrogenase 1 (GDH1) (Saccharomyces uvarum (strain ATCC 76518 / CBS 7001 / CLIB 283 / NBRC 10550 / MCYC 623 / NCYC 2669 / NRRL Y-11845) (Yeast)).